A 273-amino-acid polypeptide reads, in one-letter code: Tryptase (273 aa).

Residues 1–18 form the signal peptide; it reads MLKLLLLTLPLLSSLVHA. The propeptide at 19-28 is activation peptide; that stretch reads APSLAMPREG. The Peptidase S1 domain maps to 29 to 270; that stretch reads IVGGQEASGN…YLDWIYRYVP (242 aa). An N-linked (GlcNAc...) asparagine glycan is attached at Asn49. Cys57 and Cys73 are oxidised to a cystine. Residues His72 and Asp119 each act as charge relay system in the active site. Disulfide bonds link Cys153–Cys228, Cys186–Cys209, and Cys218–Cys246. The Charge relay system role is filled by Ser222.

This sequence belongs to the peptidase S1 family. Tryptase subfamily. Homotetramer. In terms of processing, glycosylated. Mast cells.

The protein resides in the secreted. The enzyme catalyses Preferential cleavage: Arg-|-Xaa, Lys-|-Xaa, but with more restricted specificity than trypsin.. Functionally, tryptase is the major neutral protease present in mast cells and is secreted upon the coupled activation-degranulation response of this cell type. May play a role in innate immunity. The chain is Tryptase (Tpsab1) from Rattus norvegicus (Rat).